The sequence spans 695 residues: Nucleoprotein (695 aa).

Coiled coils occupy residues 316–341 (VNVG…RRHE) and 372–399 (QTLA…VEDQ). The tract at residues 424–611 (QARPMNRPTA…SPSAPQEDTR (188 aa)) is disordered. A compositionally biased stretch (basic and acidic residues) spans 438–447 (VDDKIEHEST). 2 stretches are compositionally biased toward polar residues: residues 495–505 (RQSQDLNNSQG) and 537–552 (TTDS…SDNE). The short motif at 603 to 606 (PSAP) is the PTAP/PSAP motif element.

It belongs to the filoviruses nucleoprotein family. As to quaternary structure, homooligomer. Homomultimerizes to form the nucleocapsid. Binds to viral genomic RNA. Interacts with VP35 and VP30 to form the nucleocapsid. Also interacts with VP24 and VP40. In terms of processing, phosphorylated.

It localises to the virion. The protein localises to the host cytoplasm. Encapsidates the genome, protecting it from nucleases. The encapsidated genomic RNA is termed the nucleocapsid and serves as template for transcription and replication. During replication, encapsidation by NP is coupled to RNA synthesis and all replicative products are resistant to nucleases. The chain is Nucleoprotein (NP) from Chlorocebus aethiops (Green monkey).